A 380-amino-acid chain; its full sequence is Cytochrome b (380 aa).

Helical transmembrane passes span 33–53 (FGSL…FLAM), 77–98 (WLIR…FLHV), 113–133 (WNMG…GYVL), and 178–198 (FFAF…VHLL). Positions 83 and 97 each coordinate heme b. Heme b-binding residues include H182 and H196. H201 is a binding site for a ubiquinone. 4 helical membrane passes run 226–246 (IKDF…VLFF), 288–308 (LGGV…PLLH), 320–340 (ITQT…WIGG), and 347–367 (FIMI…IFMP).

The protein belongs to the cytochrome b family. The cytochrome bc1 complex contains 11 subunits: 3 respiratory subunits (MT-CYB, CYC1 and UQCRFS1), 2 core proteins (UQCRC1 and UQCRC2) and 6 low-molecular weight proteins (UQCRH/QCR6, UQCRB/QCR7, UQCRQ/QCR8, UQCR10/QCR9, UQCR11/QCR10 and a cleavage product of UQCRFS1). This cytochrome bc1 complex then forms a dimer. Heme b serves as cofactor.

Its subcellular location is the mitochondrion inner membrane. In terms of biological role, component of the ubiquinol-cytochrome c reductase complex (complex III or cytochrome b-c1 complex) that is part of the mitochondrial respiratory chain. The b-c1 complex mediates electron transfer from ubiquinol to cytochrome c. Contributes to the generation of a proton gradient across the mitochondrial membrane that is then used for ATP synthesis. The chain is Cytochrome b (MT-CYB) from Chionomys roberti (Robert's snow vole).